An 89-amino-acid chain; its full sequence is uncharacterized protein (89 aa).

A helical transmembrane segment spans residues Phe39 to Val61.

Its subcellular location is the membrane. This is an uncharacterized protein from Saccharomyces cerevisiae (strain ATCC 204508 / S288c) (Baker's yeast).